The sequence spans 542 residues: Glucans biosynthesis protein G (542 aa).

A signal peptide spans 1 to 34 (MVSLLRCPSSKPYSSLICSLTLGAVVALSGVAYA).

This sequence belongs to the OpgD/OpgG family.

It localises to the periplasm. It participates in glycan metabolism; osmoregulated periplasmic glucan (OPG) biosynthesis. Functionally, involved in the biosynthesis of osmoregulated periplasmic glucans (OPGs). The protein is Glucans biosynthesis protein G of Shewanella baltica (strain OS155 / ATCC BAA-1091).